The following is a 94-amino-acid chain: Integration host factor subunit beta (94 aa).

Belongs to the bacterial histone-like protein family. In terms of assembly, heterodimer of an alpha and a beta chain.

This protein is one of the two subunits of integration host factor, a specific DNA-binding protein that functions in genetic recombination as well as in transcriptional and translational control. The protein is Integration host factor subunit beta of Haemophilus influenzae (strain PittGG).